Consider the following 320-residue polypeptide: uncharacterized protein (320 aa).

A disordered region spans residues 196–273 (VVPEYDFDSE…RSKNNSNTTK (78 aa)). Residues 200 to 210 (YDFDSESESDN) show a composition bias toward acidic residues. Residues 211–226 (SEEKRFVPVLETEKAP) are compositionally biased toward basic and acidic residues. Residues 248 to 273 (QPKNPKQTTLKNTLDTRSKNNSNTTK) are compositionally biased toward polar residues.

This is an uncharacterized protein from Acanthamoeba polyphaga mimivirus (APMV).